Reading from the N-terminus, the 374-residue chain is Phosphate-binding protein PstS1 (374 aa).

An N-terminal signal peptide occupies residues 1–23; it reads MKIRLHTLLAVLTAAPLLLAAAG. Cysteine 24 carries the N-palmitoyl cysteine lipid modification. The S-diacylglycerol cysteine moiety is linked to residue cysteine 24. The interval 25–48 is disordered; sequence GSKPPSGSPETGAGAGTVATTPAS. Phosphate is bound by residues 58–60, serine 88, aspartate 106, and 189–191; these read STL and SGD.

The protein belongs to the PstS family. In terms of assembly, the complex is composed of two ATP-binding proteins (PstB), two transmembrane proteins (PstC and PstA) and a solute-binding protein (PstS).

It is found in the cell membrane. The protein localises to the secreted. Its function is as follows. Functions in inorganic phosphate uptake, a phosphate-binding protein, although probably not the main uptake protein under phosphate starvation. Part of the ABC transporter complex PstSACB involved in phosphate import. A host TLR2 agonist (toll-like receptor), requires both host TLR1 and TLR2 as coreceptors. This chain is Phosphate-binding protein PstS1 (pstS1), found in Mycobacterium bovis (strain BCG / Pasteur 1173P2).